Here is a 60-residue protein sequence, read N- to C-terminus: Large ribosomal subunit protein bL32 (60 aa).

A compositionally biased stretch (basic residues) spans 1 to 20; it reads MAVQKSRKSRSRRDMRRSHH. A disordered region spans residues 1–60; the sequence is MAVQKSRKSRSRRDMRRSHHHMEVAELSIDATTGEKHRRHHMTKDGFYRGRQLFKASQED.

It belongs to the bacterial ribosomal protein bL32 family.

This chain is Large ribosomal subunit protein bL32, found in Psychrobacter sp. (strain PRwf-1).